Consider the following 238-residue polypeptide: Ribonuclease PH (238 aa).

Residues Arg86 and Gly124–Arg126 each bind phosphate.

Belongs to the RNase PH family. In terms of assembly, homohexameric ring arranged as a trimer of dimers.

It catalyses the reaction tRNA(n+1) + phosphate = tRNA(n) + a ribonucleoside 5'-diphosphate. Its function is as follows. Phosphorolytic 3'-5' exoribonuclease that plays an important role in tRNA 3'-end maturation. Removes nucleotide residues following the 3'-CCA terminus of tRNAs; can also add nucleotides to the ends of RNA molecules by using nucleoside diphosphates as substrates, but this may not be physiologically important. Probably plays a role in initiation of 16S rRNA degradation (leading to ribosome degradation) during starvation. This is Ribonuclease PH from Histophilus somni (strain 2336) (Haemophilus somnus).